The following is a 258-amino-acid chain: Regulatory protein RecX (258 aa).

Belongs to the RecX family.

It is found in the cytoplasm. Modulates RecA activity. In Streptococcus sanguinis (strain SK36), this protein is Regulatory protein RecX.